The sequence spans 241 residues: ATP synthase subunit a (241 aa).

5 helical membrane passes run 30-50 (GQVFLTSWILLGALLVFISFG), 91-111 (FIGTLFLFVFVSNWGGALIPW), 128-148 (INTTIALALLVSLSYFYAGLS), 193-213 (LVVGVLVFLVPLILPIPVMFL), and 214-234 (GLFTSAIQALIFATLAAYYIG).

This sequence belongs to the ATPase A chain family. In terms of assembly, F-type ATPases have 2 components, CF(1) - the catalytic core - and CF(0) - the membrane proton channel. CF(1) has five subunits: alpha(3), beta(3), gamma(1), delta(1), epsilon(1). CF(0) has four main subunits: a, b, b' and c.

The protein resides in the cellular thylakoid membrane. Its function is as follows. Key component of the proton channel; it plays a direct role in the translocation of protons across the membrane. The protein is ATP synthase subunit a of Prochlorococcus marinus (strain AS9601).